We begin with the raw amino-acid sequence, 185 residues long: Dirigent protein 12 (185 aa).

The signal sequence occupies residues 1-25 (MTNQIYKQVFSFFLSVLLLQSSTVS). A disulfide bridge connects residues C37 and C184. N56 and N120 each carry an N-linked (GlcNAc...) asparagine glycan.

The protein belongs to the plant dirigent protein family. As to quaternary structure, homodimer. As to expression, seed coat specific expression.

It localises to the secreted. Its subcellular location is the extracellular space. The protein localises to the apoplast. Functionally, dirigent proteins impart stereoselectivity on the phenoxy radical-coupling reaction, yielding optically active lignans from two molecules of coniferyl alcohol in the biosynthesis of lignans, flavonolignans, and alkaloids and thus plays a central role in plant secondary metabolism. Required for seed accumulation of neolignans. The polypeptide is Dirigent protein 12 (DIR12) (Arabidopsis thaliana (Mouse-ear cress)).